The sequence spans 71 residues: DNA-directed RNA polymerase subunit omega (71 aa).

It belongs to the RNA polymerase subunit omega family. As to quaternary structure, the RNAP catalytic core consists of 2 alpha, 1 beta, 1 beta' and 1 omega subunit. When a sigma factor is associated with the core the holoenzyme is formed, which can initiate transcription.

The enzyme catalyses RNA(n) + a ribonucleoside 5'-triphosphate = RNA(n+1) + diphosphate. Functionally, promotes RNA polymerase assembly. Latches the N- and C-terminal regions of the beta' subunit thereby facilitating its interaction with the beta and alpha subunits. The polypeptide is DNA-directed RNA polymerase subunit omega (Campylobacter curvus (strain 525.92)).